Here is a 291-residue protein sequence, read N- to C-terminus: MAKLSPRDIKRKIQGIKNTQRITKAMKAVSAAKLNKAKAKLNATRPYSERLYDLINDLAMFVDRDIHPLLKIRDEHKVDIVVVTADRGLAGAFNSYVIKTTLGKVKELQEAGKDVNLILIGRKAVQFFKNKGFNIIAEYEDIYRDHMNLSFTSQVGGIIAERYENEKTDAVYLINNELITTATYETKVRKLFPIEPELDYTKLSEISRYNIEPSSEEVLEQLLKRYINFQLYRALVESSTAEHAARMIAMDNATRNAGEAIKRWTIIFNKARQEAITTELIDIINASNAIE.

This sequence belongs to the ATPase gamma chain family. F-type ATPases have 2 components, CF(1) - the catalytic core - and CF(0) - the membrane proton channel. CF(1) has five subunits: alpha(3), beta(3), gamma(1), delta(1), epsilon(1). CF(0) has three main subunits: a, b and c.

The protein resides in the cell inner membrane. Functionally, produces ATP from ADP in the presence of a proton gradient across the membrane. The gamma chain is believed to be important in regulating ATPase activity and the flow of protons through the CF(0) complex. This Persephonella marina (strain DSM 14350 / EX-H1) protein is ATP synthase gamma chain.